Here is a 383-residue protein sequence, read N- to C-terminus: Succinyl-diaminopimelate desuccinylase (383 aa).

Zn(2+) is bound at residue H73. D75 is an active-site residue. Residue D107 coordinates Zn(2+). Catalysis depends on E141, which acts as the Proton acceptor. 3 residues coordinate Zn(2+): E142, E170, and H356.

It belongs to the peptidase M20A family. DapE subfamily. In terms of assembly, homodimer. Requires Zn(2+) as cofactor. It depends on Co(2+) as a cofactor.

It carries out the reaction N-succinyl-(2S,6S)-2,6-diaminopimelate + H2O = (2S,6S)-2,6-diaminopimelate + succinate. The protein operates within amino-acid biosynthesis; L-lysine biosynthesis via DAP pathway; LL-2,6-diaminopimelate from (S)-tetrahydrodipicolinate (succinylase route): step 3/3. Its function is as follows. Catalyzes the hydrolysis of N-succinyl-L,L-diaminopimelic acid (SDAP), forming succinate and LL-2,6-diaminopimelate (DAP), an intermediate involved in the bacterial biosynthesis of lysine and meso-diaminopimelic acid, an essential component of bacterial cell walls. The chain is Succinyl-diaminopimelate desuccinylase from Pseudomonas syringae pv. syringae (strain B728a).